The following is a 142-amino-acid chain: D-aminoacyl-tRNA deacylase (142 aa).

A Gly-cisPro motif, important for rejection of L-amino acids motif is present at residues 133 to 134 (GP).

Belongs to the DTD family. As to quaternary structure, homodimer.

The protein localises to the cytoplasm. It catalyses the reaction glycyl-tRNA(Ala) + H2O = tRNA(Ala) + glycine + H(+). It carries out the reaction a D-aminoacyl-tRNA + H2O = a tRNA + a D-alpha-amino acid + H(+). In terms of biological role, an aminoacyl-tRNA editing enzyme that deacylates mischarged D-aminoacyl-tRNAs. Also deacylates mischarged glycyl-tRNA(Ala), protecting cells against glycine mischarging by AlaRS. Acts via tRNA-based rather than protein-based catalysis; rejects L-amino acids rather than detecting D-amino acids in the active site. By recycling D-aminoacyl-tRNA to D-amino acids and free tRNA molecules, this enzyme counteracts the toxicity associated with the formation of D-aminoacyl-tRNA entities in vivo and helps enforce protein L-homochirality. This Acidothermus cellulolyticus (strain ATCC 43068 / DSM 8971 / 11B) protein is D-aminoacyl-tRNA deacylase.